A 673-amino-acid polypeptide reads, in one-letter code: Sodium/myo-inositol cotransporter 2 (673 aa).

Topologically, residues Met1–Ala27 are extracellular. The chain crosses the membrane as a helical span at residues Asp28–Val48. Residues Arg49–Lys56 are Cytoplasmic-facing. The chain crosses the membrane as a helical span at residues Gly57 to Ser77. Residue Asn78 is a topological domain, extracellular. A helical transmembrane segment spans residues Val79–Ala99. Residues Ala100 to Glu102 lie on the Cytoplasmic side of the membrane. The chain crosses the membrane as a helical span at residues Leu103–Gly123. Residues Gln124–Ala180 lie on the Extracellular side of the membrane. Residues Ile181 to Ile201 form a helical membrane-spanning segment. Residues Tyr202–Thr208 are Cytoplasmic-facing. A helical membrane pass occupies residues Val209–Met229. The Extracellular segment spans residues Glu230–Pro272. The chain crosses the membrane as a helical span at residues Gly273–Val293. At Gln294–Gly308 the chain is on the cytoplasmic side. A helical membrane pass occupies residues Ser309–Val329. Residues Ser330–Gly375 lie on the Extracellular side of the membrane. The chain crosses the membrane as a helical span at residues Leu376–Ala396. The Cytoplasmic segment spans residues Ser397 to Met418. Residues Ile419–Val439 form a helical membrane-spanning segment. At Gln440–Gln446 the chain is on the extracellular side. A helical membrane pass occupies residues Leu447 to Ile467. Residues Met468–Gly479 lie on the Cytoplasmic side of the membrane. The chain crosses the membrane as a helical span at residues Ala480 to Val500. The Extracellular segment spans residues Tyr501–Tyr521. The helical transmembrane segment at Leu522–Phe542 threads the bilayer. Over Thr543–Thr652 the chain is Cytoplasmic. Residues Leu653–Ala673 traverse the membrane as a helical segment.

It belongs to the sodium:solute symporter (SSF) (TC 2.A.21) family. As to expression, expressed in kidney and small intestine.

The protein resides in the membrane. The protein localises to the apical cell membrane. The enzyme catalyses myo-inositol(out) + 2 Na(+)(out) = myo-inositol(in) + 2 Na(+)(in). The catalysed reaction is 1D-chiro-inositol(out) + 2 Na(+)(out) = 1D-chiro-inositol(in) + 2 Na(+)(in). It catalyses the reaction D-glucose(out) + 2 Na(+)(out) = D-glucose(in) + 2 Na(+)(in). It carries out the reaction D-xylose(out) + 2 Na(+)(out) = D-xylose(in) + 2 Na(+)(in). Its activity is regulated as follows. MI transport activity inhibited by D-chiro-inositol (DCI), phlorizin (Pz) and sodium (Na(+)). Insulin increases D-chiro-inositol uptake. Involved in the sodium-dependent cotransport of myo-inositol (MI) with a Na(+):MI stoichiometry of 2:1. Exclusively responsible for apical MI transport and absorption in intestine. Can also transport D-chiro-inositol (DCI) but not L-fucose. Exhibits stereospecific cotransport of both D-glucose and D-xylose. May induce apoptosis through the TNF-alpha, PDCD1 pathway. May play a role in the regulation of MI concentration in serum, involving reabsorption in at least the proximal tubule of the kidney. The protein is Sodium/myo-inositol cotransporter 2 of Rattus norvegicus (Rat).